Here is a 628-residue protein sequence, read N- to C-terminus: EIN3-binding F-box protein 1 (628 aa).

The region spanning 61 to 109 (PVSIDVLPDECLFEIFRRLSGPQERSACAFVSKQWLTLVSSIRQKEIDV) is the F-box domain.

As to quaternary structure, part of a SCF (SKP1-cullin-F-box) protein ligase complex. Interacts with CUL1, SKP1A/ASK1, SKP1B/ASK2, ASK11, ASK12, ASK13, ASK18, EIN3, and EIL1. As to expression, ubiquitous.

It localises to the nucleus. The protein operates within protein modification; protein ubiquitination. In terms of biological role, component of SCF(EBF1) E3 ubiquitin ligase complexes, which may mediate the ubiquitination and subsequent proteasomal degradation of target proteins (probably including EIN3 and EIL1). Regulator of the ethylene signaling cascade by modulating the stability of EIN3 and EIL1 proteins. Confers insensitivity to ethylene. The chain is EIN3-binding F-box protein 1 (EBF1) from Arabidopsis thaliana (Mouse-ear cress).